The primary structure comprises 179 residues: Large ribosomal subunit protein uL5 (179 aa).

The protein belongs to the universal ribosomal protein uL5 family. As to quaternary structure, part of the 50S ribosomal subunit; part of the 5S rRNA/L5/L18/L25 subcomplex. Contacts the 5S rRNA and the P site tRNA. Forms a bridge to the 30S subunit in the 70S ribosome.

Functionally, this is one of the proteins that bind and probably mediate the attachment of the 5S RNA into the large ribosomal subunit, where it forms part of the central protuberance. In the 70S ribosome it contacts protein S13 of the 30S subunit (bridge B1b), connecting the 2 subunits; this bridge is implicated in subunit movement. Contacts the P site tRNA; the 5S rRNA and some of its associated proteins might help stabilize positioning of ribosome-bound tRNAs. In Bordetella bronchiseptica (strain ATCC BAA-588 / NCTC 13252 / RB50) (Alcaligenes bronchisepticus), this protein is Large ribosomal subunit protein uL5.